A 154-amino-acid chain; its full sequence is Large ribosomal subunit protein uL13 (154 aa).

The protein belongs to the universal ribosomal protein uL13 family. Part of the 50S ribosomal subunit.

Functionally, this protein is one of the early assembly proteins of the 50S ribosomal subunit, although it is not seen to bind rRNA by itself. It is important during the early stages of 50S assembly. This is Large ribosomal subunit protein uL13 from Cereibacter sphaeroides (strain ATCC 17025 / ATH 2.4.3) (Rhodobacter sphaeroides).